The chain runs to 485 residues: Choline/ethanolamine transporter flvcr2b (485 aa).

Over 1 to 46 the chain is Cytoplasmic; sequence MDTRFNDINRVKMGDESKSVDGEVNDNTYYSKTDAEVNFEHRYTTP. Residues 47–71 traverse the membrane as a helical segment; it reads ETRLYKKRWVIVCLFSSYSLCNSYQ. Positions 68 and 72 each coordinate choline. Residues 72 to 89 are Extracellular-facing; that stretch reads WIQYGIINNIFMRFYGVD. The helical transmembrane segment at 90–117 threads the bilayer; the sequence is SFTIDWMSMIYMLTYIPLIFPVSWLLDK. Residues 118 to 119 are Cytoplasmic-facing; the sequence is KG. Residues 120–139 form a helical membrane-spanning segment; sequence LRVIALVAAALNCAGTWIKV. The Extracellular segment spans residues 140–146; it reads ASARPDL. Residues 147-175 form a helical membrane-spanning segment; the sequence is FPVTFLGQFTCSVAQVFILGMPSRIASVW. 2 residues coordinate choline: Gln161 and Leu165. Residues 176–180 are Cytoplasmic-facing; the sequence is FGSDE. Residues 181–206 form a helical membrane-spanning segment; the sequence is VSTACSIGVFGNQLGIAIGFLVPPIL. Over 207–211 the chain is Extracellular; sequence VPNVD. Residues 212-241 traverse the membrane as a helical segment; that stretch reads DLDELAAHIRVMFYITAGVATFLFVLVVIV. The Cytoplasmic portion of the chain corresponds to 242–277; it reads FQERPEIPPTLAQAAARRISPESYSYTASILRLLRN. The helical transmembrane segment at 278 to 308 threads the bilayer; sequence KAFILLVITYGLNVGCFYAVSTLLNRMIIEH. Tyr295 lines the choline pocket. Topologically, residues 309-312 are extracellular; sequence YPGE. Residues 313–341 form a helical membrane-spanning segment; it reads EVNAGRIGLTIVVAGMVGSLICGIWLDRS. Topologically, residues 342-343 are cytoplasmic; that stretch reads KT. The chain crosses the membrane as a helical span at residues 344 to 366; it reads YKQTTLAVYLMSLMGLVIYAFTL. Topologically, residues 367-369 are extracellular; the sequence is DLH. Residues 370–399 traverse the membrane as a helical segment; the sequence is HLWVVFITAGALGFFMTGYLPLGFEFAVEL. The Cytoplasmic segment spans residues 400–407; the sequence is TYPESEGT. Residues 408–433 traverse the membrane as a helical segment; the sequence is SSGLLNCSAQVFGIIFTICQGKIMDS. Gln417 is a binding site for choline. The Extracellular portion of the chain corresponds to 434 to 435; that stretch reads FG. The chain crosses the membrane as a helical span at residues 436–458; that stretch reads TLAGNLFLCAFLLIGTIITGCIK. The Cytoplasmic segment spans residues 459 to 485; the sequence is SDLRRQLANQQAQTADHLDTSPTQTRF.

The protein belongs to the major facilitator superfamily. Feline leukemia virus subgroup C receptor (TC 2.A.1.28.1) family.

The protein resides in the cell membrane. It localises to the mitochondrion membrane. It is found in the endoplasmic reticulum membrane. It catalyses the reaction choline(out) = choline(in). It carries out the reaction ethanolamine(in) = ethanolamine(out). The enzyme catalyses heme b(in) = heme b(out). Its function is as follows. Choline uniporter that specifically mediates choline uptake at the blood-brain-barrier. Responsible for the majority of choline uptake across the blood-brain-barrier from the circulation into the brain. Choline, a nutrient critical for brain development, is a precursor of phosphatidylcholine, as well as betaine. Also mediates transport of ethanolamine. Choline and ethanolamine transport is not coupled with proton transport and is exclusively driven by the choline gradient across the plasma membrane. Also acts as a heme b transporter. This is Choline/ethanolamine transporter flvcr2b from Danio rerio (Zebrafish).